The primary structure comprises 359 residues: Short chain dehydrogenase resG (359 aa).

Positions 87, 110, 137, 237, and 241 each coordinate NADP(+). Tyr-237 functions as the Proton donor in the catalytic mechanism. Residue Lys-241 is the Lowers pKa of active site Tyr of the active site.

This sequence belongs to the short-chain dehydrogenases/reductases (SDR) family.

It participates in antifungal biosynthesis. Functionally, short chain dehydrogenase; part of the gene cluster that mediates the biosynthesis of the tetrahydropyranyl antifungal agent restricticin that acts as an inhibitor of CYP51 and blocks the ergosterol biosynthesis. The highly reducing polyketide synthase resH, the short chain dehydrogenase resG, the cyclase resF, the FAD-dependent monooxygenase resA and the enoylreductase resD are required to generate the first stable intermediate desmethylrestrictinol. ResH with resD biosynthesize the first polyketide chain intermediate that is reduced by resG, followed by epoxidation by resA before 6-endo cyclization via epoxide opening by resF leads to desmethylrestrictinol. The methyltransferase resE then catalyzes the C4 O-methylation of desmethylrestrictinol to produce restrictinol, and the nonribosomal peptide synthetase resC catalyzes the C3 esterification of restrictinol with glycine that leads to restricticin. The protein is Short chain dehydrogenase resG of Aspergillus sclerotiorum.